The chain runs to 100 residues: Ferredoxin (100 aa).

Positions 1-8 are excised as a propeptide; the sequence is MLSQVCRF. One can recognise a 2Fe-2S ferredoxin-type domain in the interval 9-100; sequence GTITAVKGGV…GENDGAVFEL (92 aa). Positions 46, 52, 55, and 85 each coordinate [2Fe-2S] cluster.

Requires [2Fe-2S] cluster as cofactor.

The protein resides in the hydrogenosome. Functionally, ferredoxins are iron-sulfur proteins that transfer electrons in a wide variety of metabolic reactions. It links pyruvate:ferredoxin oxidoreductase to hydrogenase. In Trichomonas vaginalis, this protein is Ferredoxin.